Consider the following 383-residue polypeptide: UDP-N-acetylglucosamine 2-epimerase (383 aa).

Belongs to the UDP-N-acetylglucosamine 2-epimerase family.

The catalysed reaction is UDP-N-acetyl-alpha-D-glucosamine = UDP-N-acetyl-alpha-D-mannosamine. The protein operates within capsule biogenesis; capsule polysaccharide biosynthesis. In terms of biological role, non-hydrolyzing C2-epimerase involved in the biosynthesis of capsular polysaccharides. Catalyzes the C2 epimerization of UDP-N-acetylglucosamine (UDP-GlcNAc) to form UDP-N-acetylmannosamine (UDP-ManNAc). The chain is UDP-N-acetylglucosamine 2-epimerase from Campylobacter jejuni.